The chain runs to 435 residues: Ribulose bisphosphate carboxylase-like protein (435 aa).

Mg(2+)-binding residues include K198, D200, and E201. K198 bears the N6-carboxylysine mark.

This sequence belongs to the RuBisCO large chain family. Type IV subfamily. In terms of assembly, homodimer. The cofactor is Mg(2+).

Functionally, may be involved in sulfur metabolism and oxidative stress response. Does not show RuBisCO activity. This is Ribulose bisphosphate carboxylase-like protein from Chlorobaculum tepidum (strain ATCC 49652 / DSM 12025 / NBRC 103806 / TLS) (Chlorobium tepidum).